The primary structure comprises 1019 residues: Photoactivated adenylate cyclase subunit alpha-like protein FB (1019 aa).

The 94-residue stretch at 55 to 148 folds into the BLUF 1 domain; the sequence is LRRLMYLSAS…GRLYGEWHMK (94 aa). Residues 204-332 enclose the Guanylate cyclase 1 domain; the sequence is VVTFIYLVEF…DCINTASRIT (129 aa). Residues 467–559 form the BLUF 2 domain; it reads LITLTYISQA…REYGSPLDMT (93 aa). The Guanylate cyclase 2 domain maps to 615-744; it reads VLLATDICSF…EVSARVMEVV (130 aa). Over residues 825 to 839 the composition is skewed to low complexity; sequence APGRGAPAGGIPSSP. Residues 825 to 862 are disordered; sequence APGRGAPAGGIPSSPKVRPPGRTNSVSSYTPDPNEALD. The segment covering 846 to 855 has biased composition (polar residues); it reads RTNSVSSYTP.

This sequence belongs to the adenylyl cyclase class-4/guanylyl cyclase family. As to quaternary structure, heterotetramer of two alpha and two beta subunits.

The protein localises to the cell projection. It is found in the cilium. Its subcellular location is the flagellum. The polypeptide is Photoactivated adenylate cyclase subunit alpha-like protein FB (Euglena gracilis).